Here is a 591-residue protein sequence, read N- to C-terminus: Probable acetolactate synthase large subunit (591 aa).

Position 47 (glutamate 47) interacts with thiamine diphosphate. FAD contacts are provided by residues arginine 149, 258 to 279, and 301 to 320; these read HGTK…IGCR and DIDP…IVGD. The segment at 396–476 is thiamine pyrophosphate binding; sequence QNQMWMAHFF…VVICIFDNRT (81 aa). Residues aspartate 447 and asparagine 474 each coordinate Mg(2+).

Belongs to the TPP enzyme family. In terms of assembly, dimer of large and small chains. Requires Mg(2+) as cofactor. It depends on thiamine diphosphate as a cofactor.

The catalysed reaction is 2 pyruvate + H(+) = (2S)-2-acetolactate + CO2. It participates in amino-acid biosynthesis; L-isoleucine biosynthesis; L-isoleucine from 2-oxobutanoate: step 1/4. The protein operates within amino-acid biosynthesis; L-valine biosynthesis; L-valine from pyruvate: step 1/4. The protein is Probable acetolactate synthase large subunit (ilvB) of Methanocaldococcus jannaschii (strain ATCC 43067 / DSM 2661 / JAL-1 / JCM 10045 / NBRC 100440) (Methanococcus jannaschii).